Reading from the N-terminus, the 215-residue chain is Octanoyltransferase (215 aa).

Positions 31–206 (TTAPDEIWLV…QLVKHLDYAE (176 aa)) constitute a BPL/LPL catalytic domain. Substrate contacts are provided by residues 70-77 (RGGQVTYH), 137-139 (SLG), and 150-152 (GLA). Residue cysteine 168 is the Acyl-thioester intermediate of the active site.

Belongs to the LipB family.

Its subcellular location is the cytoplasm. It carries out the reaction octanoyl-[ACP] + L-lysyl-[protein] = N(6)-octanoyl-L-lysyl-[protein] + holo-[ACP] + H(+). It participates in protein modification; protein lipoylation via endogenous pathway; protein N(6)-(lipoyl)lysine from octanoyl-[acyl-carrier-protein]: step 1/2. Functionally, catalyzes the transfer of endogenously produced octanoic acid from octanoyl-acyl-carrier-protein onto the lipoyl domains of lipoate-dependent enzymes. Lipoyl-ACP can also act as a substrate although octanoyl-ACP is likely to be the physiological substrate. This Pseudomonas fluorescens (strain Pf0-1) protein is Octanoyltransferase.